Consider the following 150-residue polypeptide: Nascent polypeptide-associated complex subunit beta (150 aa).

Disordered regions lie at residues 1–45 (MADV…LQQS) and 123–150 (YQNMQQKKDDDDEIPDLVAGESFENKVE). Over residues 23-32 (TPRRKVKRAP) the composition is skewed to basic residues. Residues 36–101 (GADDKKLQQS…GEDKELTELV (66 aa)) enclose the NAC-A/B domain.

Belongs to the NAC-beta family. In terms of assembly, part of the nascent polypeptide-associated complex (NAC), consisting of EGD2 and EGD1. NAC associates with ribosomes via EGD1.

It is found in the cytoplasm. It localises to the nucleus. Functionally, component of the nascent polypeptide-associated complex (NAC), a dynamic component of the ribosomal exit tunnel, protecting the emerging polypeptides from interaction with other cytoplasmic proteins to ensure appropriate nascent protein targeting. The NAC complex also promotes mitochondrial protein import by enhancing productive ribosome interactions with the outer mitochondrial membrane and blocks the inappropriate interaction of ribosomes translating non-secretory nascent polypeptides with translocation sites in the membrane of the endoplasmic reticulum. EGD1 may act as a transcription factor that exert a negative effect on the expression of several genes that are transcribed by RNA polymerase II. This is Nascent polypeptide-associated complex subunit beta (EGD1) from Chaetomium globosum (strain ATCC 6205 / CBS 148.51 / DSM 1962 / NBRC 6347 / NRRL 1970) (Soil fungus).